Here is a 198-residue protein sequence, read N- to C-terminus: Glycerol-3-phosphate acyltransferase (198 aa).

A run of 5 helical transmembrane segments spans residues 1-21 (MILITSLAVLVSYLIGSIPAA), 52-72 (GPALLVAAFDILKGAIAVGLA), 81-101 (WTALCGVAAVLGHNFSPFLGF), 115-135 (LALDPVVGGGAFVVGVGCIWL), and 153-173 (LAAALARPGWLLLIVAFLAAL).

This sequence belongs to the PlsY family. Probably interacts with PlsX.

The protein localises to the cell membrane. It carries out the reaction an acyl phosphate + sn-glycerol 3-phosphate = a 1-acyl-sn-glycero-3-phosphate + phosphate. Its pathway is lipid metabolism; phospholipid metabolism. In terms of biological role, catalyzes the transfer of an acyl group from acyl-phosphate (acyl-PO(4)) to glycerol-3-phosphate (G3P) to form lysophosphatidic acid (LPA). This enzyme utilizes acyl-phosphate as fatty acyl donor, but not acyl-CoA or acyl-ACP. The protein is Glycerol-3-phosphate acyltransferase of Deinococcus geothermalis (strain DSM 11300 / CIP 105573 / AG-3a).